The chain runs to 462 residues: Cytochrome P450 20A1 (462 aa).

Residues 4-24 (FAIFAVTFLLALVGAVLYLYP) traverse the membrane as a helical segment. Residue Cys-409 coordinates heme.

Belongs to the cytochrome P450 family. Heme is required as a cofactor.

Its subcellular location is the membrane. This chain is Cytochrome P450 20A1 (Cyp20a1), found in Mus musculus (Mouse).